A 525-amino-acid chain; its full sequence is GMP synthase [glutamine-hydrolyzing] (525 aa).

Positions 9-207 (RILILDFGSQ…VRDICQCEAL (199 aa)) constitute a Glutamine amidotransferase type-1 domain. The active-site Nucleophile is Cys-86. Active-site residues include His-181 and Glu-183. Residues 208 to 400 (WTPAKIIDDA…LGLPYDMLYR (193 aa)) enclose the GMPS ATP-PPase domain. Residue 235–241 (SGGVDSS) coordinates ATP.

Homodimer.

The enzyme catalyses XMP + L-glutamine + ATP + H2O = GMP + L-glutamate + AMP + diphosphate + 2 H(+). It participates in purine metabolism; GMP biosynthesis; GMP from XMP (L-Gln route): step 1/1. Functionally, catalyzes the synthesis of GMP from XMP. This Shigella flexneri serotype 5b (strain 8401) protein is GMP synthase [glutamine-hydrolyzing].